Consider the following 437-residue polypeptide: ATP-dependent RNA helicase SUB2 (437 aa).

Residues 1–19 (MSHEAEEDLLEYSDNEQEV) show a composition bias toward acidic residues. The tract at residues 1 to 45 (MSHEAEEDLLEYSDNEQEVQVDNKATEVNAEGNGESQAKDSDKKG) is disordered. The short motif at 53–81 (TGFKDFLLKPELSRAIIDCGFEHPSEVQQ) is the Q motif element. One can recognise a Helicase ATP-binding domain in the interval 84–259 (IPQSIHGTDV…RRFLQNPLEI (176 aa)). Residue 97 to 104 (AKSGLGKT) participates in ATP binding. The short motif at 206-209 (DECD) is the DECD box element. In terms of domain architecture, Helicase C-terminal spans 287–432 (KLAQLLDDLE…EFPEEGVDPS (146 aa)).

Belongs to the DEAD box helicase family. DECD subfamily.

It is found in the nucleus. It carries out the reaction ATP + H2O = ADP + phosphate + H(+). ATP-binding RNA helicase involved in transcription elongation and required for the export of mRNA out of the nucleus. SUB2 also plays a role in pre-mRNA splicing and spliceosome assembly. May be involved in rDNA and telomeric silencing, and maintenance of genome integrity. This Kluyveromyces lactis (strain ATCC 8585 / CBS 2359 / DSM 70799 / NBRC 1267 / NRRL Y-1140 / WM37) (Yeast) protein is ATP-dependent RNA helicase SUB2 (SUB2).